The following is a 39-amino-acid chain: Photosystem II reaction center protein L (39 aa).

Residues 18–38 (SLYLGLLSVFVLGILFSSYFF) form a helical membrane-spanning segment.

This sequence belongs to the PsbL family. PSII is composed of 1 copy each of membrane proteins PsbA, PsbB, PsbC, PsbD, PsbE, PsbF, PsbH, PsbI, PsbJ, PsbK, PsbL, PsbM, PsbT, PsbX, PsbY, Psb30/Ycf12, peripheral proteins PsbO, CyanoQ (PsbQ), PsbU, PsbV and a large number of cofactors. It forms dimeric complexes.

It is found in the cellular thylakoid membrane. Functionally, one of the components of the core complex of photosystem II (PSII). PSII is a light-driven water:plastoquinone oxidoreductase that uses light energy to abstract electrons from H(2)O, generating O(2) and a proton gradient subsequently used for ATP formation. It consists of a core antenna complex that captures photons, and an electron transfer chain that converts photonic excitation into a charge separation. This subunit is found at the monomer-monomer interface and is required for correct PSII assembly and/or dimerization. The chain is Photosystem II reaction center protein L from Prochlorococcus marinus (strain MIT 9301).